A 621-amino-acid chain; its full sequence is UvrABC system protein C (621 aa).

The GIY-YIG domain maps to Thr-20 to Val-98. The UVR domain occupies Asp-207–Met-242.

It belongs to the UvrC family. As to quaternary structure, interacts with UvrB in an incision complex.

Its subcellular location is the cytoplasm. In terms of biological role, the UvrABC repair system catalyzes the recognition and processing of DNA lesions. UvrC both incises the 5' and 3' sides of the lesion. The N-terminal half is responsible for the 3' incision and the C-terminal half is responsible for the 5' incision. This chain is UvrABC system protein C, found in Xylella fastidiosa (strain M23).